A 704-amino-acid chain; its full sequence is Elongation factor G (704 aa).

Positions alanine 8–valine 290 constitute a tr-type G domain. GTP-binding positions include alanine 17–threonine 24, aspartate 88–histidine 92, and asparagine 142–aspartate 145. 2 positions are modified to N6-acetyllysine: lysine 504 and lysine 643.

It belongs to the TRAFAC class translation factor GTPase superfamily. Classic translation factor GTPase family. EF-G/EF-2 subfamily.

The protein localises to the cytoplasm. Functionally, catalyzes the GTP-dependent ribosomal translocation step during translation elongation. During this step, the ribosome changes from the pre-translocational (PRE) to the post-translocational (POST) state as the newly formed A-site-bound peptidyl-tRNA and P-site-bound deacylated tRNA move to the P and E sites, respectively. Catalyzes the coordinated movement of the two tRNA molecules, the mRNA and conformational changes in the ribosome. This chain is Elongation factor G, found in Shigella flexneri.